The primary structure comprises 615 residues: DNA mismatch repair protein MutL (615 aa).

A disordered region spans residues 363 to 397 (FAEPAAREPVAPRYTPAPASGSRPAAPWPNAQPGY). A compositionally biased stretch (low complexity) spans 364–391 (AEPAAREPVAPRYTPAPASGSRPAAPWP).

The protein belongs to the DNA mismatch repair MutL/HexB family.

In terms of biological role, this protein is involved in the repair of mismatches in DNA. It is required for dam-dependent methyl-directed DNA mismatch repair. May act as a 'molecular matchmaker', a protein that promotes the formation of a stable complex between two or more DNA-binding proteins in an ATP-dependent manner without itself being part of a final effector complex. The sequence is that of DNA mismatch repair protein MutL from Escherichia coli O9:H4 (strain HS).